A 240-amino-acid chain; its full sequence is Tetrahydromethanopterin S-methyltransferase subunit A (240 aa).

Residues 1–218 are Cytoplasmic-facing; it reads MADKKEPAPG…KFHSGVHAGK (218 aa). A 5-hydroxybenzimidazolylcob(I)amide-binding site is contributed by His-85. The helical transmembrane segment at 219 to 239 threads the bilayer; sequence IEGAMIGLTVTISLLGLLLLG. Arg-240 is a topological domain (extracellular).

It belongs to the MtrA family. The complex is composed of 8 subunits; MtrA, MtrB, MtrC, MtrD, MtrE, MtrF, MtrG and MtrH. It depends on 5-hydroxybenzimidazolylcob(I)amide as a cofactor.

It is found in the cell membrane. It catalyses the reaction 5-methyl-5,6,7,8-tetrahydromethanopterin + coenzyme M + 2 Na(+)(in) = 5,6,7,8-tetrahydromethanopterin + methyl-coenzyme M + 2 Na(+)(out). Its pathway is one-carbon metabolism; methanogenesis from CO(2); methyl-coenzyme M from 5,10-methylene-5,6,7,8-tetrahydromethanopterin: step 2/2. In terms of biological role, part of a complex that catalyzes the formation of methyl-coenzyme M and tetrahydromethanopterin from coenzyme M and methyl-tetrahydromethanopterin. This is an energy-conserving, sodium-ion translocating step. The protein is Tetrahydromethanopterin S-methyltransferase subunit A of Methanosarcina barkeri (strain Fusaro / DSM 804).